A 498-amino-acid polypeptide reads, in one-letter code: ATP synthase subunit beta, chloroplastic (498 aa).

172 to 179 is an ATP binding site; the sequence is GGAGVGKT.

It belongs to the ATPase alpha/beta chains family. As to quaternary structure, F-type ATPases have 2 components, CF(1) - the catalytic core - and CF(0) - the membrane proton channel. CF(1) has five subunits: alpha(3), beta(3), gamma(1), delta(1), epsilon(1). CF(0) has four main subunits: a(1), b(1), b'(1) and c(9-12).

The protein localises to the plastid. Its subcellular location is the chloroplast thylakoid membrane. The enzyme catalyses ATP + H2O + 4 H(+)(in) = ADP + phosphate + 5 H(+)(out). Its function is as follows. Produces ATP from ADP in the presence of a proton gradient across the membrane. The catalytic sites are hosted primarily by the beta subunits. In Triticum aestivum (Wheat), this protein is ATP synthase subunit beta, chloroplastic.